The following is a 536-amino-acid chain: CTP synthase (536 aa).

The amidoligase domain stretch occupies residues 1–268; that stretch reads MKSKFIFITG…GKVLCKLFNI (268 aa). Serine 14 is a CTP binding site. Residue serine 14 coordinates UTP. 15-20 lines the ATP pocket; it reads SLGKGL. An L-glutamine-binding site is contributed by tyrosine 55. Residue aspartate 72 coordinates ATP. The Mg(2+) site is built by aspartate 72 and glutamate 142. Residues 149 to 151, 189 to 194, and lysine 225 each bind CTP; these read DIE and KTKPMQ. UTP contacts are provided by residues 189-194 and lysine 225; that span reads KTKPMQ. A Glutamine amidotransferase type-1 domain is found at 293 to 535; it reads TIALVGKYVE…IKAAVDNKIN (243 aa). An L-glutamine-binding site is contributed by glycine 356. Residue cysteine 383 is the Nucleophile; for glutamine hydrolysis of the active site. L-glutamine contacts are provided by residues 384-387, glutamate 407, and arginine 463; that span reads LGMQ. Active-site residues include histidine 508 and glutamate 510.

Belongs to the CTP synthase family. Homotetramer.

It carries out the reaction UTP + L-glutamine + ATP + H2O = CTP + L-glutamate + ADP + phosphate + 2 H(+). The catalysed reaction is L-glutamine + H2O = L-glutamate + NH4(+). The enzyme catalyses UTP + NH4(+) + ATP = CTP + ADP + phosphate + 2 H(+). The protein operates within pyrimidine metabolism; CTP biosynthesis via de novo pathway; CTP from UDP: step 2/2. With respect to regulation, allosterically activated by GTP, when glutamine is the substrate; GTP has no effect on the reaction when ammonia is the substrate. The allosteric effector GTP functions by stabilizing the protein conformation that binds the tetrahedral intermediate(s) formed during glutamine hydrolysis. Inhibited by the product CTP, via allosteric rather than competitive inhibition. Catalyzes the ATP-dependent amination of UTP to CTP with either L-glutamine or ammonia as the source of nitrogen. Regulates intracellular CTP levels through interactions with the four ribonucleotide triphosphates. The polypeptide is CTP synthase (Treponema denticola (strain ATCC 35405 / DSM 14222 / CIP 103919 / JCM 8153 / KCTC 15104)).